A 625-amino-acid polypeptide reads, in one-letter code: Adenine deaminase 2 (625 aa).

It belongs to the metallo-dependent hydrolases superfamily. Adenine deaminase family. It depends on Mn(2+) as a cofactor.

The catalysed reaction is adenine + H2O + H(+) = hypoxanthine + NH4(+). This chain is Adenine deaminase 2, found in Bradyrhizobium diazoefficiens (strain JCM 10833 / BCRC 13528 / IAM 13628 / NBRC 14792 / USDA 110).